The following is a 61-amino-acid chain: Photosystem II reaction center protein K (61 aa).

Residues 1–24 constitute a propeptide that is removed on maturation; the sequence is MPNIFSLICICLNSALQPSGFFFA. The helical transmembrane segment at 36–56 threads the bilayer; that stretch reads IVDFMPVIPVLFFLLAFVWQA.

Belongs to the PsbK family. In terms of assembly, PSII is composed of 1 copy each of membrane proteins PsbA, PsbB, PsbC, PsbD, PsbE, PsbF, PsbH, PsbI, PsbJ, PsbK, PsbL, PsbM, PsbT, PsbX, PsbY, PsbZ, Psb30/Ycf12, at least 3 peripheral proteins of the oxygen-evolving complex and a large number of cofactors. It forms dimeric complexes.

It localises to the plastid. The protein resides in the chloroplast thylakoid membrane. Functionally, one of the components of the core complex of photosystem II (PSII). PSII is a light-driven water:plastoquinone oxidoreductase that uses light energy to abstract electrons from H(2)O, generating O(2) and a proton gradient subsequently used for ATP formation. It consists of a core antenna complex that captures photons, and an electron transfer chain that converts photonic excitation into a charge separation. The protein is Photosystem II reaction center protein K of Nymphaea alba (White water-lily).